The primary structure comprises 719 residues: Anaphase-promoting complex subunit 4 (719 aa).

One copy of the WD repeat lies at 57-96 (NSQRIWDVDFHDLEATELCWNHDGNLIVVGFKNGELKIID).

In terms of assembly, the APC/C is composed of at least 13 subunits: apc1, apc2, nuc2, apc4, apc5, cut9, apc8, apc10, apc11, hcn1, apc13, apc14 and apc15. Interacts with apc1 and dim1.

Component of the anaphase-promoting complex/cyclosome (APC/C), a cell cycle-regulated E3 ubiquitin-protein ligase complex that controls progression through mitosis and the G1 phase of the cell cycle. The APC/C is thought to confer substrate specificity and, in the presence of ubiquitin-conjugating E2 enzymes, it catalyzes the formation of protein-ubiquitin conjugates that are subsequently degraded by the 26S proteasome. Has a role in promoting metaphase to anaphase transition via the ubiquitination of specific mitotic substrates. The sequence is that of Anaphase-promoting complex subunit 4 (cut20) from Schizosaccharomyces pombe (strain 972 / ATCC 24843) (Fission yeast).